A 262-amino-acid chain; its full sequence is MTQGAQRLVSMRALLESGAHFGHQTKRWNPKMRPYIFTARNGIHIIDLQKTITGLTEAYQFIVETVAAGQKVLFVGTKKQAQETIAEEATRAGQFYVTQRWLGGTLTNFATMRKRLRYLNDLEDQRARGEFNKLTKAEALKLDAEIEKLNKVFGGMKTMDRLPGALFIVDPHKEALAVKEANKTGIPVVAMVDTNCDPDLIDYVIPCNDDAIRSIRLIAAKIADAAIEGQNRRESLQADVHGAGYEQEMTAQLIAREAEAVE.

Belongs to the universal ribosomal protein uS2 family.

The chain is Small ribosomal subunit protein uS2 from Roseiflexus sp. (strain RS-1).